The chain runs to 473 residues: DNA-binding protein (473 aa).

2 disordered regions span residues 1–69 and 85–111; these read MAGR…GFSH and RRLEPKGVPPPSEENNEEEEPSTSKAV. The span at 7 to 18 shows a compositional bias: polar residues; the sequence is ELPTITPYLQET. The span at 53–62 shows a compositional bias: acidic residues; sequence PDSEEEEEEV. Y141 bears the Phosphotyrosine; by host mark. Positions 230 and 232 each coordinate Zn(2+). The flexible loop stretch occupies residues 243 to 277; the sequence is VEMDVASENAQRALKEHPSRAKVVQNRWGRSVVQL. The Zn(2+) site is built by C285, C301, C342, C344, C396, and C412. The C-terminal arm, DBP binding stretch occupies residues 459–473; the sequence is VALPASHGDGEKEPF.

The protein belongs to the adenoviridae E2A DNA-binding protein family. As to quaternary structure, homomultimerizes on viral ssDNA bound to pTP. Forms a initiation complex with viral polymerase, pTP and hosts NFIA and POU2F1/OCT1. Interacts with host SRCAP.

The protein localises to the host nucleus. In terms of biological role, plays a role in the elongation phase of viral strand displacement replication by unwinding the template in an ATP-independent fashion, employing its capacity to form multimers. Also enhances the rate of initiation. Released from template upon second strand synthesis. Assembles in complex with viral pTP, viral pol, host NFIA and host POU2F1/OCT1 on viral origin of replication. Covers the whole ssDNA genome during synthesis. The complementary strand synthesis induces its relese from DNA template. May inhibit cellular transcription mediated by the interaction between host SRCAP and CBP. The polypeptide is DNA-binding protein (Homo sapiens (Human)).